Here is a 1350-residue protein sequence, read N- to C-terminus: ABC transporter G family member 45 (1350 aa).

Positions 1–23 (MAAAVELTGDGGTTAETRWLSPP) are disordered. One can recognise an ABC transporter 1 domain in the interval 85–357 (AACAHMCTTR…FETMGFKCPS (273 aa)). Residue 118–125 (GAPGSGKT) coordinates ATP. The ABC transmembrane type-2 1 domain occupies 434 to 647 (NIFKACFSRE…AQNAVALNEF (214 aa)). The next 6 membrane-spanning stretches (helical) occupy residues 453 to 473 (VHIF…TLFL), 491 to 511 (ALFM…AMTI), 523 to 543 (ILAL…LPIS), 557 to 577 (VIGY…LFAM), 597 to 617 (MANM…GFVI), and 683 to 703 (ICVS…IFAL). Residues 749–1001 (LVFDHINYFV…NMIKYFEAIP (253 aa)) form the ABC transporter 2 domain. An ATP-binding site is contributed by 794–801 (GITGAGKT). The region spanning 1074 to 1288 (AQCMACLWKQ…TVYGLMFSQL (215 aa)) is the ABC transmembrane type-2 2 domain. The next 7 membrane-spanning stretches (helical) occupy residues 1099–1119 (INTF…GSTI), 1126–1146 (FNIL…NCSI), 1181–1201 (LPYM…MIGF), 1208–1228 (FFWF…YGMM), 1238–1258 (IAAG…GFII), 1269–1289 (WVYW…SQLG), and 1322–1342 (LVTS…FLSI).

The protein belongs to the ABC transporter superfamily. ABCG family. PDR (TC 3.A.1.205) subfamily.

The protein localises to the membrane. Functionally, may be a general defense protein. The polypeptide is ABC transporter G family member 45 (Oryza sativa subsp. japonica (Rice)).